A 686-amino-acid chain; its full sequence is Glycine--tRNA ligase beta subunit (686 aa).

This sequence belongs to the class-II aminoacyl-tRNA synthetase family. In terms of assembly, tetramer of two alpha and two beta subunits.

Its subcellular location is the cytoplasm. It carries out the reaction tRNA(Gly) + glycine + ATP = glycyl-tRNA(Gly) + AMP + diphosphate. This is Glycine--tRNA ligase beta subunit from Halothermothrix orenii (strain H 168 / OCM 544 / DSM 9562).